The sequence spans 274 residues: Acyl-[acyl-carrier-protein]--UDP-N-acetylglucosamine O-acyltransferase (274 aa).

This sequence belongs to the transferase hexapeptide repeat family. LpxA subfamily. In terms of assembly, homotrimer.

The protein localises to the cytoplasm. The enzyme catalyses a (3R)-hydroxyacyl-[ACP] + UDP-N-acetyl-alpha-D-glucosamine = a UDP-3-O-[(3R)-3-hydroxyacyl]-N-acetyl-alpha-D-glucosamine + holo-[ACP]. It functions in the pathway glycolipid biosynthesis; lipid IV(A) biosynthesis; lipid IV(A) from (3R)-3-hydroxytetradecanoyl-[acyl-carrier-protein] and UDP-N-acetyl-alpha-D-glucosamine: step 1/6. Its function is as follows. Involved in the biosynthesis of lipid A, a phosphorylated glycolipid that anchors the lipopolysaccharide to the outer membrane of the cell. This chain is Acyl-[acyl-carrier-protein]--UDP-N-acetylglucosamine O-acyltransferase, found in Bartonella henselae (strain ATCC 49882 / DSM 28221 / CCUG 30454 / Houston 1) (Rochalimaea henselae).